Here is a 290-residue protein sequence, read N- to C-terminus: Small ribosomal subunit biogenesis GTPase RsgA (290 aa).

Residues 61 to 218 (SSELLRPAVA…IVDTPGFSTL (158 aa)) enclose the CP-type G domain. Residues 110 to 113 (NKVD) and 161 to 169 (GPSGAGKST) contribute to the GTP site. Cysteine 243, cysteine 248, histidine 250, and cysteine 256 together coordinate Zn(2+).

The protein belongs to the TRAFAC class YlqF/YawG GTPase family. RsgA subfamily. As to quaternary structure, monomer. Associates with 30S ribosomal subunit, binds 16S rRNA. Zn(2+) is required as a cofactor.

The protein resides in the cytoplasm. Its function is as follows. One of several proteins that assist in the late maturation steps of the functional core of the 30S ribosomal subunit. Helps release RbfA from mature subunits. May play a role in the assembly of ribosomal proteins into the subunit. Circularly permuted GTPase that catalyzes slow GTP hydrolysis, GTPase activity is stimulated by the 30S ribosomal subunit. This Clostridium botulinum (strain Eklund 17B / Type B) protein is Small ribosomal subunit biogenesis GTPase RsgA.